The sequence spans 193 residues: Probable 3' cyclic ADP-D-ribose synthase ThsB' (193 aa).

Homodimer.

It catalyses the reaction NAD(+) = 3'cADPR + nicotinamide + H(+). In terms of biological role, TIR-like domain-containing component of the Thoeris antiviral defense system, composed of ThsA and ThsB and ThsB'. In the presence of NAD(+) produces a signaling molecule that activates cognate ThsA (AC J8G6Z1) to hydrolyze NAD(+). The signaling molecule is a cyclic ADP-D-ribose isomer and may be 3' cyclic ADP-D-ribose (3'cADPR); it is not 2'cADPR. The polypeptide is Probable 3' cyclic ADP-D-ribose synthase ThsB' (Bacillus cereus (strain MSX-D12)).